Here is a 1382-residue protein sequence, read N- to C-terminus: Y' element ATP-dependent helicase protein 1 copy 4 (1382 aa).

A Helicase ATP-binding domain is found at 383–560; that stretch reads EIYMADTPSV…LQRIGLTGLA (178 aa). 396-403 serves as a coordination point for ATP; that stretch reads APPGYGKT. The region spanning 617–766 is the Helicase C-terminal domain; the sequence is KLLLALFEIE…EFYGLESKKG (150 aa). Disordered stretches follow at residues 840 to 864 and 880 to 1007; these read ANAS…NVRT and TTES…DINK. Positions 880–983 are enriched in low complexity; sequence TTESTNSSTN…ATTTESTNAS (104 aa). The span at 984–1007 shows a compositional bias: basic and acidic residues; that stretch reads AKEDANKDGNAEDNRFHPVTDINK.

Belongs to the helicase family. Yeast subtelomeric Y' repeat subfamily.

Catalyzes DNA unwinding and is involved in telomerase-independent telomere maintenance. The chain is Y' element ATP-dependent helicase protein 1 copy 4 (YRF1-4) from Saccharomyces cerevisiae (strain ATCC 204508 / S288c) (Baker's yeast).